The following is a 247-amino-acid chain: ATP synthase subunit a, chloroplastic (247 aa).

A run of 5 helical transmembrane segments spans residues 38 to 58 (QVLITSWVVIAILLGSASIAV), 95 to 115 (VPFIGTMFLFIFVSNWSGALL), 134 to 154 (INTTVALALLTSVAYFYAGLS), 199 to 219 (LVVVVLVSLVPSVVPIPVMFL), and 220 to 240 (GLFTSGIQALIFATLAAAYIG).

Belongs to the ATPase A chain family. F-type ATPases have 2 components, CF(1) - the catalytic core - and CF(0) - the membrane proton channel. CF(1) has five subunits: alpha(3), beta(3), gamma(1), delta(1), epsilon(1). CF(0) has four main subunits: a, b, b' and c.

It is found in the plastid. The protein resides in the chloroplast thylakoid membrane. Its function is as follows. Key component of the proton channel; it plays a direct role in the translocation of protons across the membrane. The polypeptide is ATP synthase subunit a, chloroplastic (Oenothera argillicola (Appalachian evening primrose)).